Reading from the N-terminus, the 382-residue chain is Methylthioribose-1-phosphate isomerase (382 aa).

Residue Asp-258 is the Proton donor of the active site.

This sequence belongs to the eIF-2B alpha/beta/delta subunits family. MtnA subfamily.

Its subcellular location is the cytoplasm. The protein localises to the nucleus. The catalysed reaction is 5-(methylsulfanyl)-alpha-D-ribose 1-phosphate = 5-(methylsulfanyl)-D-ribulose 1-phosphate. Its pathway is amino-acid biosynthesis; L-methionine biosynthesis via salvage pathway; L-methionine from S-methyl-5-thio-alpha-D-ribose 1-phosphate: step 1/6. Its function is as follows. Catalyzes the interconversion of methylthioribose-1-phosphate (MTR-1-P) into methylthioribulose-1-phosphate (MTRu-1-P). This Laccaria bicolor (strain S238N-H82 / ATCC MYA-4686) (Bicoloured deceiver) protein is Methylthioribose-1-phosphate isomerase.